Reading from the N-terminus, the 500-residue chain is Probable cytosol aminopeptidase (500 aa).

K265 and D270 together coordinate Mn(2+). The active site involves K277. Mn(2+) is bound by residues D288, D347, and E349. Residue R351 is part of the active site.

It belongs to the peptidase M17 family. Mn(2+) serves as cofactor.

Its subcellular location is the cytoplasm. The catalysed reaction is Release of an N-terminal amino acid, Xaa-|-Yaa-, in which Xaa is preferably Leu, but may be other amino acids including Pro although not Arg or Lys, and Yaa may be Pro. Amino acid amides and methyl esters are also readily hydrolyzed, but rates on arylamides are exceedingly low.. It carries out the reaction Release of an N-terminal amino acid, preferentially leucine, but not glutamic or aspartic acids.. In terms of biological role, presumably involved in the processing and regular turnover of intracellular proteins. Catalyzes the removal of unsubstituted N-terminal amino acids from various peptides. The protein is Probable cytosol aminopeptidase of Corynebacterium diphtheriae (strain ATCC 700971 / NCTC 13129 / Biotype gravis).